We begin with the raw amino-acid sequence, 245 residues long: 1-(5-phosphoribosyl)-5-[(5-phosphoribosylamino)methylideneamino] imidazole-4-carboxamide isomerase (245 aa).

The active-site Proton acceptor is the Asp-7. Asp-129 acts as the Proton donor in catalysis.

This sequence belongs to the HisA/HisF family.

The protein localises to the cytoplasm. The catalysed reaction is 1-(5-phospho-beta-D-ribosyl)-5-[(5-phospho-beta-D-ribosylamino)methylideneamino]imidazole-4-carboxamide = 5-[(5-phospho-1-deoxy-D-ribulos-1-ylimino)methylamino]-1-(5-phospho-beta-D-ribosyl)imidazole-4-carboxamide. It participates in amino-acid biosynthesis; L-histidine biosynthesis; L-histidine from 5-phospho-alpha-D-ribose 1-diphosphate: step 4/9. This Escherichia coli O17:K52:H18 (strain UMN026 / ExPEC) protein is 1-(5-phosphoribosyl)-5-[(5-phosphoribosylamino)methylideneamino] imidazole-4-carboxamide isomerase.